The chain runs to 446 residues: UDP-N-acetylmuramoylalanine--D-glutamate ligase (446 aa).

116-122 (GSNGKTT) serves as a coordination point for ATP.

The protein belongs to the MurCDEF family.

It is found in the cytoplasm. The enzyme catalyses UDP-N-acetyl-alpha-D-muramoyl-L-alanine + D-glutamate + ATP = UDP-N-acetyl-alpha-D-muramoyl-L-alanyl-D-glutamate + ADP + phosphate + H(+). Its pathway is cell wall biogenesis; peptidoglycan biosynthesis. In terms of biological role, cell wall formation. Catalyzes the addition of glutamate to the nucleotide precursor UDP-N-acetylmuramoyl-L-alanine (UMA). The sequence is that of UDP-N-acetylmuramoylalanine--D-glutamate ligase from Marinobacter nauticus (strain ATCC 700491 / DSM 11845 / VT8) (Marinobacter aquaeolei).